We begin with the raw amino-acid sequence, 350 residues long: ATPase GET3 (350 aa).

K26–T33 is a binding site for ATP. D57 is an active-site residue. Residues E243 and N270 each coordinate ATP. Zn(2+) is bound by residues C282 and C285.

It belongs to the arsA ATPase family. In terms of assembly, homodimer. Component of the Golgi to ER traffic (GET) complex, which is composed of GET1, GET2 and GET3. Within the complex, GET1 and GET2 form a heterotetramer which is stabilized by phosphatidylinositol binding and which binds to the GET3 homodimer. Interacts with the chloride channel protein GEF1.

The protein localises to the cytoplasm. It localises to the endoplasmic reticulum. Its subcellular location is the golgi apparatus. Its function is as follows. ATPase required for the post-translational delivery of tail-anchored (TA) proteins to the endoplasmic reticulum. Recognizes and selectively binds the transmembrane domain of TA proteins in the cytosol. This complex then targets to the endoplasmic reticulum by membrane-bound receptors GET1 and GET2, where the tail-anchored protein is released for insertion. This process is regulated by ATP binding and hydrolysis. ATP binding drives the homodimer towards the closed dimer state, facilitating recognition of newly synthesized TA membrane proteins. ATP hydrolysis is required for insertion. Subsequently, the homodimer reverts towards the open dimer state, lowering its affinity for the GET1-GET2 receptor, and returning it to the cytosol to initiate a new round of targeting. Cooperates with the HDEL receptor ERD2 to mediate the ATP-dependent retrieval of resident ER proteins that contain a C-terminal H-D-E-L retention signal from the Golgi to the ER. Involved in low-level resistance to the oxyanions arsenite and arsenate, and in heat tolerance. The polypeptide is ATPase GET3 (Candida dubliniensis (strain CD36 / ATCC MYA-646 / CBS 7987 / NCPF 3949 / NRRL Y-17841) (Yeast)).